The chain runs to 392 residues: Phosphoglycerate kinase (392 aa).

Substrate contacts are provided by residues Asp-21 to Asn-23, Arg-36, His-59 to Arg-62, Arg-113, and Arg-146. Residues Lys-197, Glu-314, and Gly-340–Thr-343 each bind ATP.

Belongs to the phosphoglycerate kinase family. In terms of assembly, monomer.

It localises to the cytoplasm. The catalysed reaction is (2R)-3-phosphoglycerate + ATP = (2R)-3-phospho-glyceroyl phosphate + ADP. It functions in the pathway carbohydrate degradation; glycolysis; pyruvate from D-glyceraldehyde 3-phosphate: step 2/5. The chain is Phosphoglycerate kinase from Vesicomyosocius okutanii subsp. Calyptogena okutanii (strain HA).